The following is a 360-amino-acid chain: NAD(P)H-quinone oxidoreductase subunit 1, chloroplastic (360 aa).

Transmembrane regions (helical) follow at residues 27–47 (IWIF…VLVI), 98–118 (FSIG…IIPF), 129–149 (IGIF…LMSG), 165–185 (AAQS…ISLL), 203–223 (FWGW…ISSL), 253–273 (FGLF…FVTV), 297–317 (IFGT…FLFI), and 340–360 (FLLP…LFSL).

The protein belongs to the complex I subunit 1 family. NDH is composed of at least 16 different subunits, 5 of which are encoded in the nucleus.

It localises to the plastid. Its subcellular location is the chloroplast thylakoid membrane. It catalyses the reaction a plastoquinone + NADH + (n+1) H(+)(in) = a plastoquinol + NAD(+) + n H(+)(out). The enzyme catalyses a plastoquinone + NADPH + (n+1) H(+)(in) = a plastoquinol + NADP(+) + n H(+)(out). Its function is as follows. NDH shuttles electrons from NAD(P)H:plastoquinone, via FMN and iron-sulfur (Fe-S) centers, to quinones in the photosynthetic chain and possibly in a chloroplast respiratory chain. The immediate electron acceptor for the enzyme in this species is believed to be plastoquinone. Couples the redox reaction to proton translocation, and thus conserves the redox energy in a proton gradient. This chain is NAD(P)H-quinone oxidoreductase subunit 1, chloroplastic, found in Lobularia maritima (Sweet alyssum).